The chain runs to 332 residues: Probable endo-beta-1,4-glucanase B (332 aa).

Residues 1-18 (MKFQSTLLLAAAAGSALA) form the signal peptide. Residues Asn-38 and Asn-100 are each glycosylated (N-linked (GlcNAc...) asparagine). The active-site Proton donor is Glu-160. Asn-212 carries N-linked (GlcNAc...) asparagine glycosylation. The Nucleophile role is filled by Glu-267. A glycan (N-linked (GlcNAc...) asparagine) is linked at Asn-289.

This sequence belongs to the glycosyl hydrolase 5 (cellulase A) family.

Its subcellular location is the secreted. The enzyme catalyses Endohydrolysis of (1-&gt;4)-beta-D-glucosidic linkages in cellulose, lichenin and cereal beta-D-glucans.. Its function is as follows. Has endoglucanase activity on substrates containing beta-1,4 glycosidic bonds, like in carboxymethylcellulose (CMC), hydroxyethylcellulose (HEC) and beta-glucan. Involved in the degradation of complex natural cellulosic substrates. This is Probable endo-beta-1,4-glucanase B (eglB) from Aspergillus kawachii (strain NBRC 4308) (White koji mold).